A 73-amino-acid polypeptide reads, in one-letter code: Neurotoxin Cex13 (73 aa).

The N-terminal stretch at 1-7 is a signal peptide; sequence ATGNVWA. Residues 8-71 form the LCN-type CS-alpha/beta domain; that stretch reads KDGYLVIIKT…TWPLPDKTCG (64 aa). Disulfide bonds link Cys19-Cys70, Cys23-Cys46, Cys32-Cys51, and Cys36-Cys53. Cys70 is subject to Cysteine amide. Positions 71 to 73 are excised as a propeptide; it reads GTK.

The protein belongs to the long (4 C-C) scorpion toxin superfamily. Sodium channel inhibitor family. Beta subfamily. As to expression, expressed by the venom gland.

It localises to the secreted. Beta toxins bind voltage-independently at site-4 of sodium channels (Nav) and shift the voltage of activation toward more negative potentials thereby affecting sodium channel activation and promoting spontaneous and repetitive firing. The chain is Neurotoxin Cex13 from Centruroides exilicauda (Bark scorpion).